We begin with the raw amino-acid sequence, 285 residues long: Polyamine aminopropyltransferase (285 aa).

The PABS domain occupies 2 to 237; it reads DLWFSESHTP…GYWCFGFASK (236 aa). Position 31 (Gln31) interacts with S-methyl-5'-thioadenosine. Asp86 serves as a coordination point for spermidine. S-methyl-5'-thioadenosine-binding positions include Glu106 and 137 to 138; that span reads DG. Asp155 acts as the Proton acceptor in catalysis.

The protein belongs to the spermidine/spermine synthase family. Homodimer or homotetramer.

The protein localises to the cytoplasm. It catalyses the reaction S-adenosyl 3-(methylsulfanyl)propylamine + putrescine = S-methyl-5'-thioadenosine + spermidine + H(+). It participates in amine and polyamine biosynthesis; spermidine biosynthesis; spermidine from putrescine: step 1/1. Functionally, catalyzes the irreversible transfer of a propylamine group from the amino donor S-adenosylmethioninamine (decarboxy-AdoMet) to putrescine (1,4-diaminobutane) to yield spermidine. The polypeptide is Polyamine aminopropyltransferase (Streptococcus uberis (strain ATCC BAA-854 / 0140J)).